We begin with the raw amino-acid sequence, 622 residues long: 1-deoxy-D-xylulose-5-phosphate synthase (622 aa).

Thiamine diphosphate is bound by residues histidine 74 and 115–117 (GHS). Position 146 (aspartate 146) interacts with Mg(2+). Residues 147-148 (GA), asparagine 177, phenylalanine 285, and glutamate 366 each bind thiamine diphosphate. Asparagine 177 serves as a coordination point for Mg(2+).

Belongs to the transketolase family. DXPS subfamily. In terms of assembly, homodimer. It depends on Mg(2+) as a cofactor. Thiamine diphosphate serves as cofactor.

The enzyme catalyses D-glyceraldehyde 3-phosphate + pyruvate + H(+) = 1-deoxy-D-xylulose 5-phosphate + CO2. It participates in metabolic intermediate biosynthesis; 1-deoxy-D-xylulose 5-phosphate biosynthesis; 1-deoxy-D-xylulose 5-phosphate from D-glyceraldehyde 3-phosphate and pyruvate: step 1/1. Catalyzes the acyloin condensation reaction between C atoms 2 and 3 of pyruvate and glyceraldehyde 3-phosphate to yield 1-deoxy-D-xylulose-5-phosphate (DXP). In Magnetococcus marinus (strain ATCC BAA-1437 / JCM 17883 / MC-1), this protein is 1-deoxy-D-xylulose-5-phosphate synthase.